The chain runs to 377 residues: N-acetyldiaminopimelate deacetylase (377 aa).

D69 is a catalytic residue. The active-site Proton acceptor is the E128.

It belongs to the peptidase M20A family. N-acetyldiaminopimelate deacetylase subfamily.

It catalyses the reaction N-acetyl-(2S,6S)-2,6-diaminopimelate + H2O = (2S,6S)-2,6-diaminopimelate + acetate. It functions in the pathway amino-acid biosynthesis; L-lysine biosynthesis via DAP pathway; LL-2,6-diaminopimelate from (S)-tetrahydrodipicolinate (acetylase route): step 3/3. In terms of biological role, catalyzes the conversion of N-acetyl-diaminopimelate to diaminopimelate and acetate. The chain is N-acetyldiaminopimelate deacetylase from Streptococcus gordonii (strain Challis / ATCC 35105 / BCRC 15272 / CH1 / DL1 / V288).